Consider the following 472-residue polypeptide: Protein c-ets-2-A (472 aa).

Residues 85–170 (NTFNGFAKKR…EHLEEMMKEH (86 aa)) form the PNT domain. Residues 366 to 446 (IQLWQFLLEL…SGKRYVYRFV (81 aa)) constitute a DNA-binding region (ETS).

It belongs to the ETS family.

It localises to the nucleus. Its function is as follows. Probable transcription factor. The polypeptide is Protein c-ets-2-A (ets2-a) (Xenopus laevis (African clawed frog)).